We begin with the raw amino-acid sequence, 91 residues long: Large ribosomal subunit protein bL27 (91 aa).

The disordered stretch occupies residues 1–20 (MAHKKGVGSSKNGRDSNPKY).

This sequence belongs to the bacterial ribosomal protein bL27 family.

In Deinococcus geothermalis (strain DSM 11300 / CIP 105573 / AG-3a), this protein is Large ribosomal subunit protein bL27.